A 501-amino-acid chain; its full sequence is Phase 2 flagellin (501 aa).

It belongs to the bacterial flagellin family.

It is found in the secreted. It localises to the bacterial flagellum. Flagellin is the subunit protein which polymerizes to form the filaments of bacterial flagella. The chain is Phase 2 flagellin (fljB) from Salmonella abortus-equi.